The sequence spans 109 residues: Polyprenyl transferase subC (109 aa).

2 consecutive transmembrane segments (helical) span residues Leu39–Ile59 and Gln84–Leu104.

Belongs to the UbiA prenyltransferase family. The cofactor is Mg(2+).

The protein resides in the membrane. Its pathway is secondary metabolite biosynthesis; terpenoid biosynthesis. In terms of biological role, polyprenyl transferase; part of the gene cluster that mediates the biosynthesis of the immunosuppressants subglutinols, meroterpenoids consisting of an alpha-pyrone (4-hydroxy-5,6-dimethyl-2-pyrone) moiety attached to a decalin core fused to a five-membered cyclic ether carrying a prenylside chain. The first step of the pathway is the synthesis of the alpha-pyrone moiety by the polyketide synthase subA via condensation of one acetyl-CoA starter unit with 3 malonyl-CoA units and 2 methylations. The alpha-pyrone is then combined with geranylgeranyl pyrophosphate (GGPP) formed by the GGPP synthase subD through the action of the prenyltransferase subC to yield a linear alpha-pyrone diterpenoid. Subsequent steps in the subglutinol biosynthetic pathway involve the decalin core formation, which is thought to be initiated by the epoxidation of the C10-C11 olefin by the FAD-dependent oxidoreductase subE. The following cyclization cascade would be catalyzed by the terpene cyclase subB. Lastly, the FAD-dependent dehydrogenase subF probably catalyzes the five-membered cyclic ether formation to complete the formation of subglutinol A. Subsequent redox reactions appear to give rise to subglutinol C and D, however, it remains unclear which enzymes are responsible for these transformations. SubD may have secondary function in the conversion of the identified subglutinols to subglutinol analog 45, which seems to be the major product of the cluster. The protein is Polyprenyl transferase subC of Metarhizium robertsii (strain ARSEF 23 / ATCC MYA-3075) (Metarhizium anisopliae (strain ARSEF 23)).